Reading from the N-terminus, the 141-residue chain is Hemoglobin subunit alpha (141 aa).

The Globin domain occupies valine 1–arginine 141. Serine 3 is modified (phosphoserine). Residues lysine 7 and lysine 11 each carry the N6-succinyllysine modification. An N6-acetyllysine; alternate modification is found at lysine 16. Lysine 16 bears the N6-succinyllysine; alternate mark. Tyrosine 24 carries the post-translational modification Phosphotyrosine. At serine 35 the chain carries Phosphoserine. N6-succinyllysine is present on lysine 40. Serine 49 bears the Phosphoserine mark. Histidine 58 is a binding site for O2. Histidine 87 contributes to the heme b binding site. Serine 102 is modified (phosphoserine). Residue threonine 108 is modified to Phosphothreonine. Residues serine 124 and serine 131 each carry the phosphoserine modification. Phosphothreonine occurs at positions 134 and 137. A Phosphoserine modification is found at serine 138.

It belongs to the globin family. Heterotetramer of two alpha chains and two beta chains. Red blood cells.

Involved in oxygen transport from the lung to the various peripheral tissues. Its function is as follows. Hemopressin acts as an antagonist peptide of the cannabinoid receptor CNR1. Hemopressin-binding efficiently blocks cannabinoid receptor CNR1 and subsequent signaling. In Leontocebus fuscicollis (Brown-mantled tamarin), this protein is Hemoglobin subunit alpha (HBA).